The primary structure comprises 610 residues: Elongation factor 4 (610 aa).

The tr-type G domain occupies 11 to 193 (EKIRNFSIIA…QIVEKVPAPT (183 aa)). GTP is bound by residues 23-28 (DHGKST) and 140-143 (NKID).

It belongs to the TRAFAC class translation factor GTPase superfamily. Classic translation factor GTPase family. LepA subfamily.

The protein localises to the cell membrane. It carries out the reaction GTP + H2O = GDP + phosphate + H(+). Required for accurate and efficient protein synthesis under certain stress conditions. May act as a fidelity factor of the translation reaction, by catalyzing a one-codon backward translocation of tRNAs on improperly translocated ribosomes. Back-translocation proceeds from a post-translocation (POST) complex to a pre-translocation (PRE) complex, thus giving elongation factor G a second chance to translocate the tRNAs correctly. Binds to ribosomes in a GTP-dependent manner. The sequence is that of Elongation factor 4 from Streptococcus pyogenes serotype M12 (strain MGAS9429).